Reading from the N-terminus, the 867-residue chain is cGMP-dependent 3',5'-cGMP phosphodiesterase A (867 aa).

The segment covering 121 to 146 has biased composition (low complexity); sequence IINSSSSTTDTSKTSPIKKQTSSSSP. Disordered stretches follow at residues 121-167 and 180-241; these read IINS…SQQQ and HHHH…STFP. Residues 147–160 show a composition bias toward pro residues; sequence PLSPQQQQPPPPLV. The span at 191 to 220 shows a compositional bias: low complexity; sequence NDNNNNTTTNNNNIEILEQQQQQQQQQQQQ. Residues 221 to 232 show a composition bias toward acidic residues; the sequence is QDEDSTDVDEEF. Residues 357 to 503 are phosphodiesterase activity; that stretch reads STTGFVLWIN…GDTCYDPNRI (147 aa). A divalent metal cation contacts are provided by His-399, His-401, and Asp-403. A nucleoside 3',5'-cyclic phosphate contacts are provided by residues 607–721 and 734–851; these read IFRS…WEMR and VFSR…IFVD.

It belongs to the metallo-beta-lactamase superfamily. cNMP phosphodiesterase family. The cofactor is Mn(2+). Mg(2+) is required as a cofactor. Zn(2+) serves as cofactor.

Its subcellular location is the cytoplasm. The protein resides in the cytosol. It carries out the reaction 3',5'-cyclic GMP + H2O = GMP + H(+). In terms of biological role, phosphodiesterase specific for cGMP, which is activated by cGMP but not by cAMP. Involved in the degradation of intracellular cGMP, contributes to the control of cGMP signals. The polypeptide is cGMP-dependent 3',5'-cGMP phosphodiesterase A (pdeD) (Dictyostelium discoideum (Social amoeba)).